The sequence spans 155 residues: SsrA-binding protein (155 aa).

This sequence belongs to the SmpB family.

It localises to the cytoplasm. In terms of biological role, required for rescue of stalled ribosomes mediated by trans-translation. Binds to transfer-messenger RNA (tmRNA), required for stable association of tmRNA with ribosomes. tmRNA and SmpB together mimic tRNA shape, replacing the anticodon stem-loop with SmpB. tmRNA is encoded by the ssrA gene; the 2 termini fold to resemble tRNA(Ala) and it encodes a 'tag peptide', a short internal open reading frame. During trans-translation Ala-aminoacylated tmRNA acts like a tRNA, entering the A-site of stalled ribosomes, displacing the stalled mRNA. The ribosome then switches to translate the ORF on the tmRNA; the nascent peptide is terminated with the 'tag peptide' encoded by the tmRNA and targeted for degradation. The ribosome is freed to recommence translation, which seems to be the essential function of trans-translation. The protein is SsrA-binding protein of Streptococcus pneumoniae (strain 70585).